The primary structure comprises 112 residues: Protein lin-52 homolog (112 aa).

It belongs to the lin-52 family. As to quaternary structure, component of the DREAM complex.

This is Protein lin-52 homolog (lin52) from Danio rerio (Zebrafish).